The chain runs to 518 residues: GMP synthase [glutamine-hydrolyzing] (518 aa).

The Glutamine amidotransferase type-1 domain maps to 6 to 200; the sequence is RLLIIDFGSQ…FVRLAGFKGD (195 aa). C84 (nucleophile) is an active-site residue. Active-site residues include H175 and E177. The 193-residue stretch at 201–393 folds into the GMPS ATP-PPase domain; it reads WTMGAYREEA…LGLPESFIGR (193 aa). 228–234 provides a ligand contact to ATP; sequence SGGVDSS.

As to quaternary structure, homodimer.

It catalyses the reaction XMP + L-glutamine + ATP + H2O = GMP + L-glutamate + AMP + diphosphate + 2 H(+). It functions in the pathway purine metabolism; GMP biosynthesis; GMP from XMP (L-Gln route): step 1/1. In terms of biological role, catalyzes the synthesis of GMP from XMP. This chain is GMP synthase [glutamine-hydrolyzing], found in Cereibacter sphaeroides (strain ATCC 17029 / ATH 2.4.9) (Rhodobacter sphaeroides).